The sequence spans 414 residues: Sex comb on midleg-like protein 4 (414 aa).

Phosphoserine is present on residues Ser55 and Ser65. Residues 257 to 276 are compositionally biased toward polar residues; it reads HRGSLHPSSSLYCKRQNSGD. The segment at 257-343 is disordered; the sequence is HRGSLHPSSS…DARRPRSRNP (87 aa). A compositionally biased stretch (low complexity) spans 284–304; sequence AATAGGPRTSPMSSGGPSAPG. The 67-residue stretch at 288-354 folds into the SAM domain; that stretch reads GGPRTSPMSS…AWTVEDVVWF (67 aa). Polar residues predominate over residues 312–332; sequence PKRNTTSLEGNRCASSPSQDA.

The protein belongs to the SCM family.

Its subcellular location is the nucleus. Functionally, putative Polycomb group (PcG) protein. PcG proteins act by forming multiprotein complexes, which are required to maintain the transcriptionally repressive state of homeotic genes throughout development. The protein is Sex comb on midleg-like protein 4 (SCML4) of Homo sapiens (Human).